The primary structure comprises 424 residues: 3-isopropylmalate dehydratase large subunit 2 (424 aa).

Cys299, Cys359, and Cys362 together coordinate [4Fe-4S] cluster.

It belongs to the aconitase/IPM isomerase family. LeuC type 2 subfamily. Heterodimer of LeuC and LeuD. The cofactor is [4Fe-4S] cluster.

The catalysed reaction is (2R,3S)-3-isopropylmalate = (2S)-2-isopropylmalate. It functions in the pathway amino-acid biosynthesis; L-leucine biosynthesis; L-leucine from 3-methyl-2-oxobutanoate: step 2/4. Functionally, catalyzes the isomerization between 2-isopropylmalate and 3-isopropylmalate, via the formation of 2-isopropylmaleate. The sequence is that of 3-isopropylmalate dehydratase large subunit 2 from Rubrobacter xylanophilus (strain DSM 9941 / JCM 11954 / NBRC 16129 / PRD-1).